A 1098-amino-acid polypeptide reads, in one-letter code: Protein diaphanous homolog 2 (1098 aa).

Residue M1 is modified to N-acetylmethionine. Residues 1 to 62 (MEELGAAASG…SFRKSATKRE (62 aa)) are disordered. Residues 36-52 (ANEEETRNKPKLRDRIT) are compositionally biased toward basic and acidic residues. The region spanning 90–463 (SLILSEKEVL…QIVLHCSGMD (374 aa)) is the GBD/FH3 domain. Coiled coils occupy residues 375–416 (QLRV…NMLK) and 490–539 (EENE…GQGV). Disordered regions lie at residues 537 to 565 (QGVP…PPPP), 578 to 611 (PPPP…GVFP), 679 to 699 (MKGQ…PKKK), 1007 to 1047 (HKRK…NKEG), and 1063 to 1098 (GAAF…MSSK). Composition is skewed to pro residues over residues 543–565 (IPGP…PPPP) and 578–608 (PPPP…PPGG). The FH1 domain occupies 544–620 (PGPPPPPPLP…PLLSGPIELP (77 aa)). Residues 625-1025 (QKKLYKPDIP…SRRAKLAKEK (401 aa)) form the FH2 domain. A coiled-coil region spans residues 999 to 1050 (FLEALKENHKRKEMEEKSRRAKLAKEKAEQEKLERQKKKKQLIDINKEGDET). Composition is skewed to basic and acidic residues over residues 1007-1032 (HKRK…EKLE) and 1075-1087 (RNPD…LERS). Residues 1048 to 1078 (DETGVMDNLLEALQSGAAFRDRRKRIPRNPD) enclose the DAD domain.

This sequence belongs to the formin homology family. Diaphanous subfamily. Interacts with MAPRE1 and APC.

In terms of biological role, may be involved in oogenesis. This is Protein diaphanous homolog 2 (Diaph2) from Mus musculus (Mouse).